An 85-amino-acid polypeptide reads, in one-letter code: Small ribosomal subunit protein uS17 (85 aa).

The protein belongs to the universal ribosomal protein uS17 family. Part of the 30S ribosomal subunit.

In terms of biological role, one of the primary rRNA binding proteins, it binds specifically to the 5'-end of 16S ribosomal RNA. The chain is Small ribosomal subunit protein uS17 from Aggregatibacter actinomycetemcomitans (Actinobacillus actinomycetemcomitans).